Here is a 309-residue protein sequence, read N- to C-terminus: Acetylglutamate kinase (309 aa).

Substrate-binding positions include 82-83, arginine 104, and asparagine 206; that span reads GG.

It belongs to the acetylglutamate kinase family. ArgB subfamily.

It is found in the cytoplasm. The enzyme catalyses N-acetyl-L-glutamate + ATP = N-acetyl-L-glutamyl 5-phosphate + ADP. It participates in amino-acid biosynthesis; L-arginine biosynthesis; N(2)-acetyl-L-ornithine from L-glutamate: step 2/4. Its function is as follows. Catalyzes the ATP-dependent phosphorylation of N-acetyl-L-glutamate. This is Acetylglutamate kinase from Cupriavidus pinatubonensis (strain JMP 134 / LMG 1197) (Cupriavidus necator (strain JMP 134)).